The sequence spans 169 residues: MRLLGLDPGLRITGWGVIEVTGNRIGHVADGVVRSDDRLSLAARLAQLHGGIVAVLKAYEPVEAAVEETFVNRNPASTLKLGQARGAVMLAPALAGLVVAEYQPSVVKKAVVGTGGAAKDQVGMMIRTLLPGATLETADAADALAIAICHAHYRAGALSLALARAGGGR.

Residues Asp7, Glu67, and Asp139 contribute to the active site. Asp7, Glu67, and Asp139 together coordinate Mg(2+).

The protein belongs to the RuvC family. As to quaternary structure, homodimer which binds Holliday junction (HJ) DNA. The HJ becomes 2-fold symmetrical on binding to RuvC with unstacked arms; it has a different conformation from HJ DNA in complex with RuvA. In the full resolvosome a probable DNA-RuvA(4)-RuvB(12)-RuvC(2) complex forms which resolves the HJ. The cofactor is Mg(2+).

It localises to the cytoplasm. The enzyme catalyses Endonucleolytic cleavage at a junction such as a reciprocal single-stranded crossover between two homologous DNA duplexes (Holliday junction).. In terms of biological role, the RuvA-RuvB-RuvC complex processes Holliday junction (HJ) DNA during genetic recombination and DNA repair. Endonuclease that resolves HJ intermediates. Cleaves cruciform DNA by making single-stranded nicks across the HJ at symmetrical positions within the homologous arms, yielding a 5'-phosphate and a 3'-hydroxyl group; requires a central core of homology in the junction. The consensus cleavage sequence is 5'-(A/T)TT(C/G)-3'. Cleavage occurs on the 3'-side of the TT dinucleotide at the point of strand exchange. HJ branch migration catalyzed by RuvA-RuvB allows RuvC to scan DNA until it finds its consensus sequence, where it cleaves and resolves the cruciform DNA. This chain is Crossover junction endodeoxyribonuclease RuvC, found in Rhodospirillum rubrum (strain ATCC 11170 / ATH 1.1.1 / DSM 467 / LMG 4362 / NCIMB 8255 / S1).